Consider the following 315-residue polypeptide: Lipoyl synthase (315 aa).

[4Fe-4S] cluster contacts are provided by cysteine 62, cysteine 67, cysteine 73, cysteine 88, cysteine 92, cysteine 95, and serine 302. A Radical SAM core domain is found at 74–291 (FNHGAATFMI…KKIALKLGFS (218 aa)).

This sequence belongs to the radical SAM superfamily. Lipoyl synthase family. Requires [4Fe-4S] cluster as cofactor.

It localises to the cytoplasm. The enzyme catalyses [[Fe-S] cluster scaffold protein carrying a second [4Fe-4S](2+) cluster] + N(6)-octanoyl-L-lysyl-[protein] + 2 oxidized [2Fe-2S]-[ferredoxin] + 2 S-adenosyl-L-methionine + 4 H(+) = [[Fe-S] cluster scaffold protein] + N(6)-[(R)-dihydrolipoyl]-L-lysyl-[protein] + 4 Fe(3+) + 2 hydrogen sulfide + 2 5'-deoxyadenosine + 2 L-methionine + 2 reduced [2Fe-2S]-[ferredoxin]. It participates in protein modification; protein lipoylation via endogenous pathway; protein N(6)-(lipoyl)lysine from octanoyl-[acyl-carrier-protein]: step 2/2. Functionally, catalyzes the radical-mediated insertion of two sulfur atoms into the C-6 and C-8 positions of the octanoyl moiety bound to the lipoyl domains of lipoate-dependent enzymes, thereby converting the octanoylated domains into lipoylated derivatives. In Ruthia magnifica subsp. Calyptogena magnifica, this protein is Lipoyl synthase.